The following is a 243-amino-acid chain: MTSSVSRPSGRRADALRKVALTRHYTKHAEGSVLVEFGDTKVLCTASVSERVPDFLRDRGQGWLTAEYGMLPRATHTRSDREAARGKQTGRTQEIQRLIGRALRAVFDLEALGPRTIHIDCDVIQADGGTRTASITGAFVAAHDAVSKLIAAGKITRSPITDHVAAISVGVYEGAPVLDLDYAEDSQCDTDMNVVMTGAGGFVEVQGTAEGVPFSRAEMNALLDLAQGGIAELVQLQKDVLGA.

Residues Arg-91 and 129–131 each bind phosphate; that span reads GTR.

The protein belongs to the RNase PH family. Homohexameric ring arranged as a trimer of dimers.

It catalyses the reaction tRNA(n+1) + phosphate = tRNA(n) + a ribonucleoside 5'-diphosphate. Its function is as follows. Phosphorolytic 3'-5' exoribonuclease that plays an important role in tRNA 3'-end maturation. Removes nucleotide residues following the 3'-CCA terminus of tRNAs; can also add nucleotides to the ends of RNA molecules by using nucleoside diphosphates as substrates, but this may not be physiologically important. Probably plays a role in initiation of 16S rRNA degradation (leading to ribosome degradation) during starvation. The protein is Ribonuclease PH of Burkholderia lata (strain ATCC 17760 / DSM 23089 / LMG 22485 / NCIMB 9086 / R18194 / 383).